Reading from the N-terminus, the 566-residue chain is Solute carrier family 2, facilitated glucose transporter member 9 (566 aa).

The segment at 1–31 (MARKQNRNSKELGLAPLADDTSHAGPPGPGR) is disordered. Residues 1-51 (MARKQNRNSKELGLAPLADDTSHAGPPGPGRALLECDHLRSGLPDGRRRKD) are Cytoplasmic-facing. Serine 9 bears the Phosphoserine mark. A helical transmembrane segment spans residues 52 to 72 (WSCSLLVASLAGAFGSSFLYG). Over 73–107 (YNLSVVNAPTPYIKAFYNESWERRHGRPIDPDTLT) the chain is Extracellular. Residues asparagine 74 and asparagine 90 are each glycosylated (N-linked (GlcNAc...) asparagine). A helical membrane pass occupies residues 108-128 (LLWSVTVSIFAIGGLVGTLMV). Over 129 to 140 (KMIGKVLGRKHT) the chain is Cytoplasmic. A helical membrane pass occupies residues 141–161 (LLANNGFAISAALLMACSLQA). The Extracellular portion of the chain corresponds to 162-171 (GAFEMLIVGR). The chain crosses the membrane as a helical span at residues 172-192 (FIMGIDGGIALSVLPMYLSEI). Residues 193 to 200 (SPKEIRGS) are Cytoplasmic-facing. Residues 201-221 (LGQVTAIFICIGVFTGQLLGL) form a helical membrane-spanning segment. Residues 222 to 231 (PELLGKESTW) lie on the Extracellular side of the membrane. The helical transmembrane segment at 232-252 (PYLFGVIVVPAVVQLLSLPFL) threads the bilayer. Residues 253-316 (PDSPRYLLLE…LRAPYVRWQV (64 aa)) lie on the Cytoplasmic side of the membrane. Residues 317–337 (VTVIVTMACYQLCGLNAIWFY) form a helical membrane-spanning segment. The Extracellular segment spans residues 338 to 354 (TNSIFGKAGIPPAKIPY). The chain crosses the membrane as a helical span at residues 355–375 (VTLSTGGIETLAAIFSGLVIE). Topologically, residues 376–381 (HLGRRP) are cytoplasmic. A helical membrane pass occupies residues 382 to 402 (LLIGGFGLMALFFGTLTVTLT). Over 403–415 (LQDRAPWVPYLSI) the chain is Extracellular. Residues 416–436 (VGILAIIASFCSGPGGIPFIL) form a helical membrane-spanning segment. Over 437–451 (TGEFFQQSQRPAAFI) the chain is Cytoplasmic. Residues 452-472 (IAGTVNWLSNFAVGLLFPFIQ) traverse the membrane as a helical segment. Residues 473–478 (KSLDTY) lie on the Extracellular side of the membrane. A helical transmembrane segment spans residues 479 to 499 (CFLVFATICMTGAIYLYFVLP). The Cytoplasmic portion of the chain corresponds to 500–566 (ETKNRTYAEI…YMDDLTFQET (67 aa)). Phosphoserine is present on serine 514. Basic and acidic residues predominate over residues 524-539 (EKIDSAVTDGKTKGRP). Residues 524-543 (EKIDSAVTDGKTKGRPEQVS) are disordered.

It belongs to the major facilitator superfamily. Sugar transporter (TC 2.A.1.1) family.

Its subcellular location is the basolateral cell membrane. The protein resides in the apical cell membrane. The enzyme catalyses urate(out) = urate(in). Its function is as follows. High-capacity urate transporter, which may play a role in the urate reabsorption by proximal tubules. May have a residual high-affinity, low-capacity glucose and fructose transporter activity. Transports urate at rates 45- to 60-fold faster than glucose. Does not transport galactose. May mediate small uptake of adenine but not of other nucleobases. The sequence is that of Solute carrier family 2, facilitated glucose transporter member 9 from Pongo abelii (Sumatran orangutan).